Consider the following 948-residue polypeptide: Non-lysosomal glucosylceramidase (948 aa).

Over 1–736 (MAEPLAVETK…VMDGPSAYCS (736 aa)) the chain is Extracellular. Residues 177-195 (STRDKTSDPDGDPDGERTK) show a composition bias toward basic and acidic residues. The tract at residues 177-197 (STRDKTSDPDGDPDGERTKCQ) is disordered. The N-linked (GlcNAc...) asparagine glycan is linked to asparagine 200. Residue serine 214 is modified to Phosphoserine. Asparagine 288, asparagine 555, and asparagine 629 each carry an N-linked (GlcNAc...) asparagine glycan. Phosphoserine occurs at positions 667 and 669. Residue asparagine 673 is glycosylated (N-linked (GlcNAc...) asparagine). A helical transmembrane segment spans residues 737–753 (GLWLAALQAMSAMATIL). Residues 754–948 (DQPNDCLRYQ…ALERRRAQRD (195 aa)) are Cytoplasmic-facing.

The protein belongs to the non-lysosomal glucosylceramidase family.

The protein resides in the cell membrane. The enzyme catalyses a beta-D-glucosyl-(1&lt;-&gt;1')-N-acylsphing-4-enine + H2O = an N-acylsphing-4-enine + D-glucose. In terms of biological role, non-lysosomal glucosylceramidase that catalyzes the conversion of glucosylceramide to free glucose and ceramide. This chain is Non-lysosomal glucosylceramidase, found in Drosophila melanogaster (Fruit fly).